The sequence spans 423 residues: Serine--tRNA ligase (423 aa).

Threonine 231–glutamate 233 is an L-serine binding site. Arginine 262 to glutamate 264 is an ATP binding site. An L-serine-binding site is contributed by glutamate 285. Residue glutamate 349–serine 352 coordinates ATP. Serine 385 is an L-serine binding site.

The protein belongs to the class-II aminoacyl-tRNA synthetase family. Type-1 seryl-tRNA synthetase subfamily. Homodimer. The tRNA molecule binds across the dimer.

It localises to the cytoplasm. The catalysed reaction is tRNA(Ser) + L-serine + ATP = L-seryl-tRNA(Ser) + AMP + diphosphate + H(+). The enzyme catalyses tRNA(Sec) + L-serine + ATP = L-seryl-tRNA(Sec) + AMP + diphosphate + H(+). Its pathway is aminoacyl-tRNA biosynthesis; selenocysteinyl-tRNA(Sec) biosynthesis; L-seryl-tRNA(Sec) from L-serine and tRNA(Sec): step 1/1. Functionally, catalyzes the attachment of serine to tRNA(Ser). Is also able to aminoacylate tRNA(Sec) with serine, to form the misacylated tRNA L-seryl-tRNA(Sec), which will be further converted into selenocysteinyl-tRNA(Sec). The protein is Serine--tRNA ligase of Phytoplasma mali (strain AT).